Here is a 1026-residue protein sequence, read N- to C-terminus: Maternal effect protein staufen (1026 aa).

The span at 16 to 29 (AAHHHSHSHAHMHL) shows a compositional bias: basic residues. 3 disordered regions span residues 16–159 (AAHH…QLPP), 190–210 (NHYGSNANSNSGSNNSNSNYA), and 234–311 (TPVP…KDKT). Residues 70–111 (AQQQQQQQTSSNQAGAVAAAGAAYHHGNINSNSGSNISSNSN) show a composition bias toward low complexity. Residues 112–126 (QMQKIRQQHQHLSSS) are compositionally biased toward polar residues. Low complexity-rich tracts occupy residues 192-210 (YGSNANSNSGSNNSNSNYA) and 234-256 (TPVPEPPVTTNNATTNSTSNSTV). Residues 267–284 (TSQKPETRQEPASADDHV) show a composition bias toward basic and acidic residues. The segment covering 285–303 (STGNIDATGALSNEDTSSS) has biased composition (polar residues). DRBM domains are found at residues 311–378 (TPMC…ETMY) and 490–557 (PKFP…VLKT). A phosphoserine mark is found at Ser-563 and Ser-570. Positions 578-645 (SPISQVHEIG…AEKMLVELQK (68 aa)) constitute a DRBM 3 domain. His-606, Lys-608, Lys-628, Lys-629, and Lys-632 together coordinate RNA. Residues 647-707 (PPLTPTKQTP…PPKDKLIDMD (61 aa)) are disordered. 2 positions are modified to phosphothreonine: Thr-650 and Thr-655. A Phosphoserine modification is found at Ser-676. A compositionally biased stretch (polar residues) spans 678-688 (VSGTDGPTQTG). A DRBM 4 domain is found at 711 to 781 (NPITKLIQLQ…AQALFELLEA (71 aa)). Residues 855-948 (ESKEEEANKE…SNSTSNTQSA (94 aa)) form a disordered region. Residues 864–890 (EVAVAAEENSNNSANSGDSSNSSSGDS) show a composition bias toward low complexity. Positions 891–901 (QATEAASESAL) are enriched in polar residues. Composition is skewed to low complexity over residues 902 to 920 (NTSTGSNTSGVSSNSSNVG) and 934 to 947 (NTESSSNSTSNTQS). The 68-residue stretch at 951–1018 (HMKEQLLYLS…ASNALKILSK (68 aa)) folds into the DRBM 5 domain.

In terms of assembly, component of neuronal ribonucleoprotein complexes (RNPs) that contains at least various translational repressor and mRNA turnover proteins such as me31B, tral, Upf1, AGO2 and sometimes Fmr1. In terms of tissue distribution, polar granules at the posterior pole of the oocyte, and by the time the egg is laid, at the anterior pole.

It is found in the cytoplasm. Its subcellular location is the cytoplasmic ribonucleoprotein granule. Its function is as follows. RNA-binding protein which forms ribonucleoprotein complexes (RNPs) that play critical roles in the localization, translational repression and turnover of RNAs during embryogenesis, neurotransmission and neurogenesis. In the oocyte, essential for the localization of both the osk/oskar mRNA to the posterior pole and bcd/bicoid RNA to the anterior pole, and is therefore required for the correct anterior-posterior patterning of the developing embryo. Association with osk or bcd at their respective poles, appears to promote the formation and stabilization of the ribonucleoprotein complexes. Integral component of diverse neuritic ribonucleoprotein complexes (RNPs) that mediate the transport, translation and turnover of neuronal RNAs during neuorgenesis and the translation repression of synaptic transcripts in preparation for their dendritic targeting. The protein is Maternal effect protein staufen (stau) of Drosophila melanogaster (Fruit fly).